The following is a 450-amino-acid chain: ATP-dependent protease ATPase subunit HslU (450 aa).

Residues Val-29, Gly-71–Glu-76, Asp-261, Glu-328, and Arg-400 each bind ATP.

It belongs to the ClpX chaperone family. HslU subfamily. In terms of assembly, a double ring-shaped homohexamer of HslV is capped on each side by a ring-shaped HslU homohexamer. The assembly of the HslU/HslV complex is dependent on binding of ATP.

Its subcellular location is the cytoplasm. Its function is as follows. ATPase subunit of a proteasome-like degradation complex; this subunit has chaperone activity. The binding of ATP and its subsequent hydrolysis by HslU are essential for unfolding of protein substrates subsequently hydrolyzed by HslV. HslU recognizes the N-terminal part of its protein substrates and unfolds these before they are guided to HslV for hydrolysis. This chain is ATP-dependent protease ATPase subunit HslU, found in Rickettsia conorii (strain ATCC VR-613 / Malish 7).